The sequence spans 320 residues: Small ribosomal subunit protein uS2 (320 aa).

The span at 1 to 22 (MADETTTDTPDVQDEDAPDEDA) shows a compositional bias: acidic residues. Residues 1 to 83 (MADETTTDTP…SSSEEETSHR (83 aa)) form a disordered region. Residues 27 to 41 (DDTASDSTGEAAAAD) show a composition bias toward low complexity. 2 stretches are compositionally biased toward acidic residues: residues 42-57 (TDAD…EDAP) and 65-78 (DDGD…SSEE).

Belongs to the universal ribosomal protein uS2 family.

This Salinibacter ruber (strain DSM 13855 / M31) protein is Small ribosomal subunit protein uS2.